The following is a 287-amino-acid chain: 1-acyl-sn-glycerol-3-phosphate acyltransferase alpha (287 aa).

The signal sequence occupies residues 1-26 (MELWPGAGTLLLLLFLLLLLLLPTLW). Residues 27 to 37 (FCSPSAKYFFK) are Lumenal-facing. The chain crosses the membrane as a helical span at residues 38–58 (MAFYNGWILFLAVLAIPVCAV). Over 59 to 127 (RGRNVENMKI…PGRCVPIAKR (69 aa)) the chain is Cytoplasmic. The short motif at 104 to 109 (HQSSLD) is the HXXXXD motif element. The helical transmembrane segment at 128–148 (ELLWAGSAGLACWLAGVIFID) threads the bilayer. Residues 149–287 (RKRTGDAISV…KPGGVGEAGL (139 aa)) lie on the Lumenal side of the membrane. Positions 178-181 (EGTR) match the EGTR motif motif.

This sequence belongs to the 1-acyl-sn-glycerol-3-phosphate acyltransferase family.

The protein resides in the endoplasmic reticulum membrane. The catalysed reaction is a 1-acyl-sn-glycero-3-phosphate + an acyl-CoA = a 1,2-diacyl-sn-glycero-3-phosphate + CoA. It carries out the reaction 1-(9Z-octadecenoyl)-sn-glycero-3-phosphate + (9Z)-octadecenoyl-CoA = 1,2-di-(9Z-octadecenoyl)-sn-glycero-3-phosphate + CoA. It catalyses the reaction 1-(9Z-octadecenoyl)-sn-glycero-3-phosphate + hexadecanoyl-CoA = 1-(9Z)-octadecenoyl-2-hexadecanoyl-sn-glycero-3-phosphate + CoA. The enzyme catalyses heptadecanoyl-CoA + 1-(9Z-octadecenoyl)-sn-glycero-3-phosphate = 1-(9Z)-octadecenoyl-2-heptadecanoyl-sn-glycero-3-phosphate + CoA. The catalysed reaction is 1-(9Z-octadecenoyl)-sn-glycero-3-phosphate + octadecanoyl-CoA = 1-(9Z-octadecenoyl)-2-octadecanoyl-sn-glycero-3-phosphate + CoA. It carries out the reaction 1-(9Z-octadecenoyl)-sn-glycero-3-phosphate + (9Z,12Z)-octadecadienoyl-CoA = 1-(9Z)-octadecenoyl-2-(9Z,12Z)-octadecadienoyl-sn-glycero-3-phosphate + CoA. It catalyses the reaction 1-(9Z-octadecenoyl)-sn-glycero-3-phosphate + tetradecanoyl-CoA = 1-(9Z)-octadecenoyl-2-tetradecanoyl-sn-glycero-3-phosphate + CoA. The enzyme catalyses pentadecanoyl-CoA + 1-(9Z-octadecenoyl)-sn-glycero-3-phosphate = 1-(9Z)-octadecenoyl-2-pentadecanoyl-sn-glycero-3-phosphate + CoA. The catalysed reaction is 1-hexadecanoyl-sn-glycero-3-phosphate + (9Z)-octadecenoyl-CoA = 1-hexadecanoyl-2-(9Z-octadecenoyl)-sn-glycero-3-phosphate + CoA. It carries out the reaction 1-(9Z,12Z,15Z)-octadecatrienoyl-sn-glycero-3-phosphate + (9Z)-octadecenoyl-CoA = 1-(9Z,12Z,15Z)-octadecatrienoyl-2-(9Z)-octadecenoyl-sn-glycero-3-phosphate + CoA. It catalyses the reaction 1-(6Z,9Z,12Z-octadecatrienoyl)-sn-glycero-3-phosphate + (9Z)-octadecenoyl-CoA = (6Z,9Z,12Z)-octadecatrienoyl-2-(9Z)-octadecenoyl-sn-glycero-3-phosphate + CoA. The enzyme catalyses 1-eicosanoyl-sn-glycero-3-phosphate + (9Z)-octadecenoyl-CoA = 1-eicosanoyl-2-(9Z)-octadecenoyl-sn-glycero-3-phosphate + CoA. The catalysed reaction is 1-tetradecanoyl-sn-glycerol 3-phosphate + (9Z)-octadecenoyl-CoA = 1-tetradecanoyl-2-(9Z)-octadecenoyl-sn-glycero-3-phosphate + CoA. It carries out the reaction 1-(9Z-octadecenoyl)-sn-glycero-3-phosphate + (5Z,8Z,11Z,14Z)-eicosatetraenoyl-CoA = 1-(9Z)-octadecenoyl-2-(5Z,8Z,11Z,14Z)-eicosatetraenoyl-sn-glycero-3-phosphate + CoA. It catalyses the reaction 1-(9Z-octadecenoyl)-sn-glycero-3-phosphate + dodecanoyl-CoA = 1-(9Z)-octadecenoyl-2-dodecanoyl-sn-glycero-3-phosphate + CoA. The enzyme catalyses (6Z)-octadecenoyl-CoA + 1-(9Z-octadecenoyl)-sn-glycero-3-phosphate = 1-(9Z)-octadecenoyl-2-(6Z)-octadecenoyl-sn-glycero-3-phosphate + CoA. The catalysed reaction is (11Z)-octadecenoyl-CoA + 1-(9Z-octadecenoyl)-sn-glycero-3-phosphate = 1-(9Z)-octadecenoyl-2-(11Z)-octadecenoyl-sn-glycero-3-phosphate + CoA. It carries out the reaction (9Z)-hexadecenoyl-CoA + 1-(9Z-octadecenoyl)-sn-glycero-3-phosphate = 1-(9Z-octadecenoyl)-2-(9Z-hexadecenoyl)-sn-glycero-3-phosphate + CoA. Its pathway is phospholipid metabolism; CDP-diacylglycerol biosynthesis; CDP-diacylglycerol from sn-glycerol 3-phosphate: step 2/3. Its function is as follows. Converts 1-acyl-sn-glycerol-3-phosphate (lysophosphatidic acid or LPA) into 1,2-diacyl-sn-glycerol-3-phosphate (phosphatidic acid or PA) by incorporating an acyl moiety at the sn-2 position of the glycerol backbone. In Bos taurus (Bovine), this protein is 1-acyl-sn-glycerol-3-phosphate acyltransferase alpha (AGPAT1).